The sequence spans 165 residues: Transcription factor TCP16 (165 aa).

Positions 1 to 11 are enriched in polar residues; that stretch reads MDSKNGINNSQ. 2 disordered regions span residues 1–21 and 146–165; these read MDSKNGINNSQKARRTPKDRH and GNATASDTTSAATTTATTTV. The segment covering 12–21 has biased composition (basic residues); the sequence is KARRTPKDRH. Residues 17–71 enclose the TCP domain; it reads PKDRHLKIGGRDRRIRIPPSVAPQLFRLTKELGFKTDGETVSWLLQNAEPAIFAA. Residues 148–165 are compositionally biased toward low complexity; the sequence is ATASDTTSAATTTATTTV.

Mostly in anther in young buds.

The protein localises to the nucleus. In terms of biological role, required during early processes in pollen development. In Arabidopsis thaliana (Mouse-ear cress), this protein is Transcription factor TCP16 (TCP16).